We begin with the raw amino-acid sequence, 448 residues long: Chromosomal replication initiator protein DnaA (448 aa).

The segment at 1–93 is domain I, interacts with DnaA modulators; sequence MEQIVSSLWS…KPTEQNLSAS (93 aa). A domain II region spans residues 94–110; the sequence is STNKEELTQDTVHKFKT. Residues 111–328 form a domain III, AAA+ region region; that stretch reads GLNGRLTFDN…GAINRVSAWC (218 aa). Residues G156, G158, K159, and T160 each coordinate ATP. Residues 329–448 are domain IV, binds dsDNA; the sequence is NFTKRQITID…YTNLTRKLSS (120 aa).

Belongs to the DnaA family. In terms of assembly, oligomerizes as a right-handed, spiral filament on DNA at oriC.

Its subcellular location is the cytoplasm. Functionally, plays an essential role in the initiation and regulation of chromosomal replication. ATP-DnaA binds to the origin of replication (oriC) to initiate formation of the DNA replication initiation complex once per cell cycle. Binds the DnaA box (a 9 base pair repeat at the origin) and separates the double-stranded (ds)DNA. Forms a right-handed helical filament on oriC DNA; dsDNA binds to the exterior of the filament while single-stranded (ss)DNA is stabiized in the filament's interior. The ATP-DnaA-oriC complex binds and stabilizes one strand of the AT-rich DNA unwinding element (DUE), permitting loading of DNA polymerase. After initiation quickly degrades to an ADP-DnaA complex that is not apt for DNA replication. Binds acidic phospholipids. The chain is Chromosomal replication initiator protein DnaA from Haemophilus ducreyi (strain 35000HP / ATCC 700724).